A 569-amino-acid chain; its full sequence is Thiol:disulfide interchange protein DsbD (569 aa).

A signal peptide spans 1 to 19 (MAQRILTLILLLCSTSAFA). Disulfide bonds link cysteine 122–cysteine 128 and cysteine 187–cysteine 309. Transmembrane regions (helical) follow at residues 168–188 (LPFSALWALLIGIGIAFTPCV), 213–233 (LLTFIYVQGMALTYTALGLVV), 248–268 (YVLIGLALVFTLLALSMFGLF), 301–321 (IAGLICSPCTTAPLSAILLYI), 328–348 (WLGGGTLYLYALGMGLPLILI), 362–382 (WMEHVKTAFGFVILALPVFLL), and 391–411 (GLRLWSLLGVAFFGWAFITSL). The Thioredoxin domain maps to 430 to 569 (LVSVRPLQDW…FSAHLRDRQP (140 aa)). An intrachain disulfide couples cysteine 484 to cysteine 487.

It belongs to the thioredoxin family. DsbD subfamily.

It localises to the cell inner membrane. It carries out the reaction [protein]-dithiol + NAD(+) = [protein]-disulfide + NADH + H(+). The enzyme catalyses [protein]-dithiol + NADP(+) = [protein]-disulfide + NADPH + H(+). Required to facilitate the formation of correct disulfide bonds in some periplasmic proteins and for the assembly of the periplasmic c-type cytochromes. Acts by transferring electrons from cytoplasmic thioredoxin to the periplasm. This transfer involves a cascade of disulfide bond formation and reduction steps. The chain is Thiol:disulfide interchange protein DsbD from Citrobacter koseri (strain ATCC BAA-895 / CDC 4225-83 / SGSC4696).